Reading from the N-terminus, the 411-residue chain is ATPase family AAA domain-containing protein 3C (411 aa).

177–184 (GPPGTGKT) contributes to the ATP binding site.

This sequence belongs to the AAA ATPase family.

The protein is ATPase family AAA domain-containing protein 3C (ATAD3C) of Homo sapiens (Human).